The primary structure comprises 170 residues: Peptide methionine sulfoxide reductase MsrA (170 aa).

Cysteine 13 is an active-site residue.

The protein belongs to the MsrA Met sulfoxide reductase family.

It carries out the reaction L-methionyl-[protein] + [thioredoxin]-disulfide + H2O = L-methionyl-(S)-S-oxide-[protein] + [thioredoxin]-dithiol. It catalyses the reaction [thioredoxin]-disulfide + L-methionine + H2O = L-methionine (S)-S-oxide + [thioredoxin]-dithiol. Has an important function as a repair enzyme for proteins that have been inactivated by oxidation. Catalyzes the reversible oxidation-reduction of methionine sulfoxide in proteins to methionine. The sequence is that of Peptide methionine sulfoxide reductase MsrA from Nocardia farcinica (strain IFM 10152).